A 166-amino-acid polypeptide reads, in one-letter code: NAD(P)H-quinone oxidoreductase subunit I, chloroplastic (166 aa).

4Fe-4S ferredoxin-type domains lie at 55–84 (GRIHFEFDKCIACEVCVRVCPIDLPVVDWK) and 95–124 (LNYSIDFGICIFCGNCVEYCPTNCLSMTEE). Residues cysteine 64, cysteine 67, cysteine 70, cysteine 74, cysteine 104, cysteine 107, cysteine 110, and cysteine 114 each coordinate [4Fe-4S] cluster.

The protein belongs to the complex I 23 kDa subunit family. NDH is composed of at least 16 different subunits, 5 of which are encoded in the nucleus. Requires [4Fe-4S] cluster as cofactor.

The protein localises to the plastid. Its subcellular location is the chloroplast thylakoid membrane. It carries out the reaction a plastoquinone + NADH + (n+1) H(+)(in) = a plastoquinol + NAD(+) + n H(+)(out). The catalysed reaction is a plastoquinone + NADPH + (n+1) H(+)(in) = a plastoquinol + NADP(+) + n H(+)(out). Functionally, NDH shuttles electrons from NAD(P)H:plastoquinone, via FMN and iron-sulfur (Fe-S) centers, to quinones in the photosynthetic chain and possibly in a chloroplast respiratory chain. The immediate electron acceptor for the enzyme in this species is believed to be plastoquinone. Couples the redox reaction to proton translocation, and thus conserves the redox energy in a proton gradient. This is NAD(P)H-quinone oxidoreductase subunit I, chloroplastic from Chaetymenia peduncularis (Daisy).